The sequence spans 97 residues: Integration host factor subunit alpha (97 aa).

The protein belongs to the bacterial histone-like protein family. In terms of assembly, heterodimer of an alpha and a beta chain.

In terms of biological role, this protein is one of the two subunits of integration host factor, a specific DNA-binding protein that functions in genetic recombination as well as in transcriptional and translational control. In Acinetobacter baylyi (strain ATCC 33305 / BD413 / ADP1), this protein is Integration host factor subunit alpha.